Reading from the N-terminus, the 618-residue chain is MLQTYAPIDFRNNDPYNTDFEDIYYNPALGFAESDHVFIAGNHLRERFSALPEYGRFTLAETGFGTGLNMINAAAHFLECAPKTAALNLISCEAYPIELETLKRIHHHWHHHELRIALYQNYPHRASGMHLIRLHPRVCLLLLWGDATRCYQACMARVNAWFLDGFAPSKNPQMWQPELFREIARLSQPNATLATFTVAAQVREQLTAVGFNVHKQTGFAQKRHMLSAVYERPLSVEKSWTDYPAPKFDTRPIAVIGAGIAGATTAYELAQRGKVVHVYHDPENPCASAVPVAVPFFLPGKTDTPMRQFHLAAWHDLCRELKCCPQGIVDRMPIALAVAEESLARRKESLADLFEPEQADIEAKKLYFYQAGALDTPRLLTYLLADKNITQYAQKIAQLTPQAEGWRIGEQIYARVVLATSWQEQLLPNALQKRMRTVRGQATFFALNAPVAGEIFCAERSFIPLPDRVHMHVGSSYSVNDCDRMRRTQDDAEHAEACRARFPQHAIQLERAFVGIRAASRDYLPLIGAVVRAESVYQRYQKWSKDRNIPINEEIDYYPQLYMHSGLGSKGTLTAFLGAKILAAMMLGDPLPIDRKLLTSIVPTRFLVKDIIRGHLNN.

A tRNA (mnm(5)s(2)U34)-methyltransferase region spans residues 1–231 (MLQTYAPIDF…KRHMLSAVYE (231 aa)). The tract at residues 256–618 (IGAGIAGATT…KDIIRGHLNN (363 aa)) is FAD-dependent cmnm(5)s(2)U34 oxidoreductase.

It in the N-terminal section; belongs to the methyltransferase superfamily. tRNA (mnm(5)s(2)U34)-methyltransferase family. The protein in the C-terminal section; belongs to the DAO family. It depends on FAD as a cofactor.

The protein localises to the cytoplasm. It catalyses the reaction 5-aminomethyl-2-thiouridine(34) in tRNA + S-adenosyl-L-methionine = 5-methylaminomethyl-2-thiouridine(34) in tRNA + S-adenosyl-L-homocysteine + H(+). In terms of biological role, catalyzes the last two steps in the biosynthesis of 5-methylaminomethyl-2-thiouridine (mnm(5)s(2)U) at the wobble position (U34) in tRNA. Catalyzes the FAD-dependent demodification of cmnm(5)s(2)U34 to nm(5)s(2)U34, followed by the transfer of a methyl group from S-adenosyl-L-methionine to nm(5)s(2)U34, to form mnm(5)s(2)U34. The sequence is that of tRNA 5-methylaminomethyl-2-thiouridine biosynthesis bifunctional protein MnmC from Dichelobacter nodosus (strain VCS1703A).